The following is a 198-amino-acid chain: Hookworm platelet inhibitor 1 (198 aa).

The signal sequence occupies residues 1–17 (MSSYLLVLVAILGFAYA). Disulfide bonds link C24–C65, C78–C146, C141–C154, C174–C186, and C177–C195.

It belongs to the CRISP family. As to quaternary structure, monomer. In terms of tissue distribution, detected in cephalic glands.

The protein resides in the secreted. Hookworms inhibitor of platelet aggregation and adhesion. Native protein inhibits platelet aggregation induced by ADP, epinephrine, and thrombin. In addition, it prevents adhesion of resting platelets to immobilized fibrinogen and collagen. May act by binding to glycoprotein IIb/IIIa (ITGA2B/ITGB3) and integrin alpha-2/beta-1 (ITGA1/ITGB1), respectively. It is noteworthy that the recombinant protein fails to inhibit binding to fibrinogen (through ITGA2B/ITGB3) and collagen (through ITGA1/ITGB1). This Ancylostoma caninum (Dog hookworm) protein is Hookworm platelet inhibitor 1.